The chain runs to 212 residues: Tetraspanin-31-B (212 aa).

Over 1-12 the chain is Cytoplasmic; it reads MVCGGFTCSKNA. Residues 13–33 traverse the membrane as a helical segment; that stretch reads LCALNVVYMLVGVLLIIVAAW. Topologically, residues 34–44 are extracellular; it reads GKGFGIVSSIH. The helical transmembrane segment at 45-65 threads the bilayer; sequence IIGGVIAIGVFLLLIAIIGLI. Over 66 to 72 the chain is Cytoplasmic; the sequence is GAVSHHQ. A helical transmembrane segment spans residues 73 to 93; sequence VMLFIYMVVLILVFIFQFIVS. The Extracellular portion of the chain corresponds to 94–175; that stretch reads CSCLAMNRSQ…MLNHADEALK (82 aa). N-linked (GlcNAc...) asparagine glycans are attached at residues Asn-100, Asn-109, Asn-117, and Asn-134. Residues 176–196 form a helical membrane-spanning segment; it reads ILGGVGLFFSFTEILGVWLAF. The Cytoplasmic segment spans residues 197 to 212; the sequence is RYRNQKDPRANPSAFL.

The protein belongs to the tetraspanin (TM4SF) family.

Its subcellular location is the membrane. The polypeptide is Tetraspanin-31-B (tspan31-b) (Xenopus laevis (African clawed frog)).